The primary structure comprises 568 residues: Proline--tRNA ligase (568 aa).

This sequence belongs to the class-II aminoacyl-tRNA synthetase family. ProS type 1 subfamily. As to quaternary structure, homodimer.

It localises to the cytoplasm. It carries out the reaction tRNA(Pro) + L-proline + ATP = L-prolyl-tRNA(Pro) + AMP + diphosphate. Its function is as follows. Catalyzes the attachment of proline to tRNA(Pro) in a two-step reaction: proline is first activated by ATP to form Pro-AMP and then transferred to the acceptor end of tRNA(Pro). As ProRS can inadvertently accommodate and process non-cognate amino acids such as alanine and cysteine, to avoid such errors it has two additional distinct editing activities against alanine. One activity is designated as 'pretransfer' editing and involves the tRNA(Pro)-independent hydrolysis of activated Ala-AMP. The other activity is designated 'posttransfer' editing and involves deacylation of mischarged Ala-tRNA(Pro). The misacylated Cys-tRNA(Pro) is not edited by ProRS. The chain is Proline--tRNA ligase from Chromobacterium violaceum (strain ATCC 12472 / DSM 30191 / JCM 1249 / CCUG 213 / NBRC 12614 / NCIMB 9131 / NCTC 9757 / MK).